A 177-amino-acid polypeptide reads, in one-letter code: Large ribosomal subunit protein uL6 (177 aa).

Belongs to the universal ribosomal protein uL6 family. Part of the 50S ribosomal subunit.

In terms of biological role, this protein binds to the 23S rRNA, and is important in its secondary structure. It is located near the subunit interface in the base of the L7/L12 stalk, and near the tRNA binding site of the peptidyltransferase center. This is Large ribosomal subunit protein uL6 from Mannheimia succiniciproducens (strain KCTC 0769BP / MBEL55E).